A 1313-amino-acid chain; its full sequence is Angiotensin-converting enzyme (1313 aa).

The N-terminal stretch at 1 to 35 is a signal peptide; the sequence is MGAASGQRGRWPLSPPLLMLSLLLLLLLPPSPAPA. Over 36–1265 the chain is Extracellular; that stretch reads LDPGLQPGNF…LEPQQARVGQ (1230 aa). 6 N-linked (GlcNAc...) asparagine glycosylation sites follow: Asn44, Asn60, Asn80, Asn117, Asn152, and Asn166. Peptidase M2 domains follow at residues 46-630 and 649-1228; these read SADE…LGWP and ETDE…LGWP. A disulfide bond links Cys163 and Cys171. Tyr237 contacts chloride. The N-linked (GlcNAc...) asparagine glycan is linked to Asn324. A disulfide bridge connects residues Cys365 and Cys383. A Zn(2+)-binding site is contributed by His396. Glu397 serves as the catalytic Proton acceptor 1. Residues His400 and Glu424 each contribute to the Zn(2+) site. A glycan (N-linked (GlcNAc...) asparagine) is linked at Asn515. Residue His526 is the Proton donor 1 of the active site. Arg535 lines the chloride pocket. A disulfide bond links Cys551 and Cys563. N-linked (GlcNAc...) asparagine glycans are attached at residues Asn683, Asn701, Asn720, and Asn766. Cys763 and Cys769 form a disulfide bridge. Residues Arg797 and Tyr835 each coordinate chloride. Asn948 carries N-linked (GlcNAc...) asparagine glycosylation. Cys963 and Cys981 form a disulfide bridge. His994 contacts Zn(2+). Glu995 (proton acceptor 2) is an active-site residue. Residues His998 and Glu1022 each contribute to the Zn(2+) site. The chloride site is built by Trp1096 and Arg1100. His1124 (proton donor 2) is an active-site residue. Residue Arg1133 participates in chloride binding. The cysteines at positions 1149 and 1161 are disulfide-linked. The N-linked (GlcNAc...) asparagine glycan is linked to Asn1197. Residues 1221–1262 form a juxtamembrane stalk region; the sequence is HGETLGWPEYTWTPNTARAEGSLPESSRVNFLGMYLEPQQAR. Residues 1266–1282 form a helical membrane-spanning segment; the sequence is WVLLFLGVALLVATVGL. The Cytoplasmic portion of the chain corresponds to 1283-1313; it reads AHRLYNIHNHHSLRRPHRGPQFGSEVELRHS. The residue at position 1306 (Ser1306) is a Phosphoserine.

Belongs to the peptidase M2 family. As to quaternary structure, monomer and homodimer; homodimerizes following binding to an inhibitor. Interacts with calmodulin (CALM1, CALM2 or CALM3); interaction takes place in the cytoplasmic region and regulates phosphorylation and proteolytic cleavage. Zn(2+) is required as a cofactor. Chloride serves as cofactor. Produced following proteolytic cleavage by secretase enzymes that cleave the transmembrane form in the juxtamembrane stalk region upstream of the transmembrane region. Cleavage can take place at different sites of the juxtamembrane stalk region. In terms of processing, phosphorylated by CK2 on Ser-1306; which allows membrane retention. Phosphorylated on tyrosine residues on its extracellular part, promoting cleavage by secretase enzymes and formation of the soluble form (Angiotensin-converting enzyme, soluble form). In terms of tissue distribution, expressed in brain, kidney, lung, skeletal muscle and heart. As to expression, testis-specific isoform is expressed in spermatocytes, adult testis.

The protein resides in the cell membrane. The protein localises to the cytoplasm. It localises to the secreted. It catalyses the reaction Release of a C-terminal dipeptide, oligopeptide-|-Xaa-Yaa, when Xaa is not Pro, and Yaa is neither Asp nor Glu. Thus, conversion of angiotensin I to angiotensin II, with increase in vasoconstrictor activity, but no action on angiotensin II.. The enzyme catalyses angiotensin I + H2O = L-histidyl-L-leucine + angiotensin II. The catalysed reaction is bradykinin + H2O = L-Phe-L-Arg + bradykinin(1-7). It carries out the reaction substance P + H2O = substance P(1-9) + L-Leu-L-Met-NH2. It catalyses the reaction substance P + H2O = substance P(1-8) + Gly-L-Leu-L-Met-NH2. The enzyme catalyses substance P + H2O = L-Phe-L-Phe-Gly-L-Leu-L-Met-NH2 + substance P(1-6). The catalysed reaction is neurotensin + H2O = neurotensin(1-11) + L-isoleucyl-L-leucine. It carries out the reaction goralatide + H2O = N-acetyl-L-seryl-L-aspartate + L-lysyl-L-proline. It catalyses the reaction Met-enkephalin + H2O = L-phenylalanyl-L-methionine + L-tyrosylglycylglycine. The enzyme catalyses Leu-enkephalin + H2O = L-tyrosylglycylglycine + L-phenylalanyl-L-leucine. The catalysed reaction is Met-enkephalin-Arg-Phe + H2O = L-arginyl-L-phenylalanine + Met-enkephalin. The dipeptidyl carboxypeptidase activity is strongly activated by chloride. The dipeptidyl carboxypeptidase activity is specifically inhibited by lisinopril, captopril and enalaprilat. Its activity is regulated as follows. Strongly inhibited by lisinopril and captopril. Its function is as follows. Dipeptidyl carboxypeptidase that removes dipeptides from the C-terminus of a variety of circulating hormones, such as angiotensin I, bradykinin or enkephalins, thereby playing a key role in the regulation of blood pressure, electrolyte homeostasis or synaptic plasticity. Composed of two similar catalytic domains, each possessing a functional active site, with different selectivity for substrates. Plays a major role in the angiotensin-renin system that regulates blood pressure and sodium retention by the kidney by converting angiotensin I to angiotensin II, resulting in an increase of the vasoconstrictor activity of angiotensin. Also able to inactivate bradykinin, a potent vasodilator, and therefore enhance the blood pressure response. Acts as a regulator of synaptic transmission by mediating cleavage of neuropeptide hormones, such as substance P, neurotensin or enkephalins. Catalyzes degradation of different enkephalin neuropeptides (Met-enkephalin, Leu-enkephalin, Met-enkephalin-Arg-Phe and possibly Met-enkephalin-Arg-Gly-Leu). Acts as a regulator of synaptic plasticity in the nucleus accumbens of the brain by mediating cleavage of Met-enkephalin-Arg-Phe, a strong ligand of Mu-type opioid receptor OPRM1, into Met-enkephalin. Met-enkephalin-Arg-Phe cleavage by ACE decreases activation of OPRM1, leading to long-term synaptic potentiation of glutamate release. Also acts as a regulator of hematopoietic stem cell differentiation by mediating degradation of hemoregulatory peptide N-acetyl-SDKP (AcSDKP). Acts as a regulator of cannabinoid signaling pathway by mediating degradation of hemopressin, an antagonist peptide of the cannabinoid receptor CNR1. Involved in amyloid-beta metabolism by catalyzing degradation of Amyloid-beta protein 40 and Amyloid-beta protein 42 peptides, thereby preventing plaque formation. Catalyzes cleavage of cholecystokinin (maturation of Cholecystokinin-8 and Cholecystokinin-5) and Gonadoliberin-1 (both maturation and degradation) hormones. Degradation of hemoregulatory peptide N-acetyl-SDKP (AcSDKP) and amyloid-beta proteins is mediated by the N-terminal catalytic domain, while angiotensin I and cholecystokinin cleavage is mediated by the C-terminal catalytic region. Functionally, soluble form that is released in blood plasma and other body fluids following proteolytic cleavage in the juxtamembrane stalk region. Isoform produced by alternative promoter usage that is specifically expressed in spermatocytes and adult testis, and which is required for male fertility. In contrast to somatic isoforms, only contains one catalytic domain. Acts as a dipeptidyl carboxypeptidase that removes dipeptides from the C-terminus of substrates. The identity of substrates that are needed for male fertility is unknown. May also have a glycosidase activity which releases GPI-anchored proteins from the membrane by cleaving the mannose linkage in the GPI moiety. The GPIase activity was reported to be essential for the egg-binding ability of the sperm. This activity is however unclear and has been challenged by other groups, suggesting that it may be indirect. This is Angiotensin-converting enzyme from Rattus norvegicus (Rat).